A 239-amino-acid chain; its full sequence is 1-(5-phosphoribosyl)-5-[(5-phosphoribosylamino)methylideneamino] imidazole-4-carboxamide isomerase (239 aa).

The Proton acceptor role is filled by aspartate 8. Aspartate 129 acts as the Proton donor in catalysis.

The protein belongs to the HisA/HisF family.

It localises to the cytoplasm. The catalysed reaction is 1-(5-phospho-beta-D-ribosyl)-5-[(5-phospho-beta-D-ribosylamino)methylideneamino]imidazole-4-carboxamide = 5-[(5-phospho-1-deoxy-D-ribulos-1-ylimino)methylamino]-1-(5-phospho-beta-D-ribosyl)imidazole-4-carboxamide. It functions in the pathway amino-acid biosynthesis; L-histidine biosynthesis; L-histidine from 5-phospho-alpha-D-ribose 1-diphosphate: step 4/9. The chain is 1-(5-phosphoribosyl)-5-[(5-phosphoribosylamino)methylideneamino] imidazole-4-carboxamide isomerase from Bacillus cereus (strain ZK / E33L).